The sequence spans 476 residues: Ribulose bisphosphate carboxylase large chain (476 aa).

Positions 124 and 174 each coordinate substrate. Lys-176 (proton acceptor) is an active-site residue. Lys-178 is a binding site for substrate. Residues Lys-202, Asp-204, and Glu-205 each coordinate Mg(2+). N6-carboxylysine is present on Lys-202. The active-site Proton acceptor is His-295. The substrate site is built by Arg-296, His-328, and Ser-380.

The protein belongs to the RuBisCO large chain family. Type I subfamily. In terms of assembly, heterohexadecamer of 8 large chains and 8 small chains; disulfide-linked. The disulfide link is formed within the large subunit homodimers. Mg(2+) is required as a cofactor. In terms of processing, the disulfide bond which can form in the large chain dimeric partners within the hexadecamer appears to be associated with oxidative stress and protein turnover.

The protein resides in the carboxysome. The enzyme catalyses 2 (2R)-3-phosphoglycerate + 2 H(+) = D-ribulose 1,5-bisphosphate + CO2 + H2O. It carries out the reaction D-ribulose 1,5-bisphosphate + O2 = 2-phosphoglycolate + (2R)-3-phosphoglycerate + 2 H(+). RuBisCO catalyzes two reactions: the carboxylation of D-ribulose 1,5-bisphosphate, the primary event in carbon dioxide fixation, as well as the oxidative fragmentation of the pentose substrate in the photorespiration process. Both reactions occur simultaneously and in competition at the same active site. This Cyanothece sp. (strain PCC 7425 / ATCC 29141) protein is Ribulose bisphosphate carboxylase large chain.